The chain runs to 178 residues: uncharacterized protein (178 aa).

Positions 1 to 13 are enriched in polar residues; that stretch reads MEVASSSSACQFD. 2 disordered regions span residues 1–24 and 47–114; these read MEVA…ELKP and WPSR…KKEK.

This is an uncharacterized protein from Caenorhabditis elegans.